A 220-amino-acid chain; its full sequence is Riboflavin kinase (220 aa).

The H-T-H motif-like stretch occupies residues 1 to 92 (MDTSDQYYRA…LSRILSIKSN (92 aa)). The riboflavin kinase stretch occupies residues 93 to 220 (IVMTGIVVPG…GDEVTIEVTA (128 aa)). A CDP-binding site is contributed by 102–107 (GMGEGK). The Mg(2+) site is built by Thr-131 and Asn-133. The FMN site is built by Thr-188 and Glu-195. 200–203 (KYLR) is a CDP binding site.

The protein belongs to the archaeal riboflavin kinase family. Requires Mg(2+) as cofactor.

It catalyses the reaction riboflavin + CTP = CDP + FMN + H(+). It functions in the pathway cofactor biosynthesis; FMN biosynthesis; FMN from riboflavin (CTP route): step 1/1. In terms of biological role, catalyzes the CTP-dependent phosphorylation of riboflavin (vitamin B2) to form flavin mononucleotide (FMN). In Thermoplasma volcanium (strain ATCC 51530 / DSM 4299 / JCM 9571 / NBRC 15438 / GSS1), this protein is Riboflavin kinase (ribK).